Here is a 1374-residue protein sequence, read N- to C-terminus: MTSTSPKSRKPSTKTTKSKSKSKSKSKAAKAAAAGASPALARTPPQFRNRVIDKKALKQLVAWAYKTHGTAVTASMADNLKDLGFRYATQAAVSISVEDLKVPEAKQDLLGQAEAQITATEECYRLGEITEVERHTKVIDTWTETNERLVDAVKKNFNQNDPLNSVWMMANSGARGNMSQVRQLVGMRGLMANPQGEIIDLPIRTNFREGLTVTEYVISSYGARKGLVDTALRTADSGYLTRRLVDVAQDVIVREDDCGTTRGIIVKAEDGGFGSRLVGRLTAEQVVNVDGEILAERNTEIDPPLSKRFEKAAITEVMVRSPLTCEANRSVCRKCYGWALAHNELADLGEAVGIIAAQSIGEPGTQLTMRTFHTGGVSTAETGVVRSTVAGTVEFGPKARVRGYRTPHGLEAQQSEVDFTLTVKPSGKGRAQRIDITTGSLLFVSDGQEIEADVTVVQIAAVAVKKSVEKATKDVICDLAGQVRYEQVIQPREVKDRQGNITLKAQRLGRLWVLAGDVYNLPPNAEPVVQGNVKVERGQVLAEASQASEFGGEVRLRDSIGDSREVQIVTTSMTMKDFKLLGESTHSGELWHLEAKDGTRYRLNTIPGSKIGNGEVVAELADDRFRTQTGGLVRFAPGLAIKKARSAKNGFEVNKGGTLLWIPQETHEINKDISLLMIEDGQWIEAGTEVVKDIFSQTAGIVTVTQKNDILREIIVRSGSFHLCTETKALERFTGDGQIVNPGETIAKGINSEAMVFVQTVDTPEGTGLLLRPMEEYTIPNEAQLPELTHVKQPKGPHLGIKATQRLAFKDGELIKSVEGVELLKTQLILETFDTTPQMTVDVEAVRDKRAKTIERLRLVILESILVRRDTISDSSHGSTHTELQIEDGQSVKASDVVATTQILCKQEGIAQLPVVQEGDPVRRLIVERDEDTITVTTNGSPLVEVGQRLVDGDSLAKDEPSSCCGEVEEVDGKAITLRLGRPYMVSPDSVLHVRDGDLVQRGDGLALLVFERQKTGDIVQGLPRIEELLEARRPRESAVLCKKPGTVEIKQGEDDESITVTVIEADDAIGEYPILLGRNVMVSNGQQVHAGELLTDGPINPHELLDCFFEDLRGRKPLMDAAQEAIAKLQHRLVTEVQNVYKSQGVSIDDKHIEVIVRQMTSKVRIEDAGDTTLLPGELIELRQVEDTNQAMAITGGAPSEFTPVLLGITKASLNTDSFISAASFQETTRVLTEAAIEGKSDWLRGLKENVIIGRLIPAGTGFSGFQEELRAEAGPHPDILAEDPAGYRRMQNLRPDYTVDMPAAPAASSTAVLADPSDADLEATRSRHGIDPAASNFAAFVRPTGENELEEEQLPDPSALEGLQQEGLLTEE.

The interval 1 to 47 (MTSTSPKSRKPSTKTTKSKSKSKSKSKAAKAAAAGASPALARTPPQF) is disordered. Over residues 7–28 (KSRKPSTKTTKSKSKSKSKSKA) the composition is skewed to basic residues. Low complexity predominate over residues 29 to 39 (AKAAAAGASPA). Zn(2+) contacts are provided by cysteine 258, cysteine 325, cysteine 332, and cysteine 335. The disordered stretch occupies residues 1344–1374 (RPTGENELEEEQLPDPSALEGLQQEGLLTEE). The span at 1362–1374 (LEGLQQEGLLTEE) shows a compositional bias: low complexity.

This sequence belongs to the RNA polymerase beta' chain family. RpoC2 subfamily. In terms of assembly, in cyanobacteria the RNAP catalytic core is composed of 2 alpha, 1 beta, 1 beta', 1 gamma and 1 omega subunit. When a sigma factor is associated with the core the holoenzyme is formed, which can initiate transcription. It depends on Zn(2+) as a cofactor.

The enzyme catalyses RNA(n) + a ribonucleoside 5'-triphosphate = RNA(n+1) + diphosphate. DNA-dependent RNA polymerase catalyzes the transcription of DNA into RNA using the four ribonucleoside triphosphates as substrates. The sequence is that of DNA-directed RNA polymerase subunit beta' from Prochlorococcus marinus (strain MIT 9313).